The sequence spans 359 residues: Protein mab-21-like 2-B (359 aa).

The protein belongs to the mab-21 family.

The protein resides in the nucleus. The protein localises to the cytoplasm. Required for several aspects of embryonic development including normal development of the eye. In Xenopus laevis (African clawed frog), this protein is Protein mab-21-like 2-B (mab21l2-b).